We begin with the raw amino-acid sequence, 1119 residues long: G8 domain-containing protein DDB_G0288475 (1119 aa).

Residues 1–22 (MKYSSFLLLFIYIFFILNNINA) form the signal peptide. A G8 domain is found at 276-404 (TIWTSGVVPL…YHNTWTKLAA (129 aa)). Residues Asn-308, Asn-559, Asn-736, Asn-854, Asn-968, Asn-1035, Asn-1056, and Asn-1070 are each glycosylated (N-linked (GlcNAc...) asparagine).

Belongs to the comF family.

It localises to the secreted. This chain is G8 domain-containing protein DDB_G0288475, found in Dictyostelium discoideum (Social amoeba).